The primary structure comprises 171 residues: 3-hydroxydecanoyl-[acyl-carrier-protein] dehydratase (171 aa).

Residue His-70 is part of the active site.

This sequence belongs to the thioester dehydratase family. FabA subfamily. As to quaternary structure, homodimer.

It localises to the cytoplasm. The enzyme catalyses a (3R)-hydroxyacyl-[ACP] = a (2E)-enoyl-[ACP] + H2O. It catalyses the reaction (3R)-hydroxydecanoyl-[ACP] = (2E)-decenoyl-[ACP] + H2O. The catalysed reaction is (2E)-decenoyl-[ACP] = (3Z)-decenoyl-[ACP]. It functions in the pathway lipid metabolism; fatty acid biosynthesis. Functionally, necessary for the introduction of cis unsaturation into fatty acids. Catalyzes the dehydration of (3R)-3-hydroxydecanoyl-ACP to E-(2)-decenoyl-ACP and then its isomerization to Z-(3)-decenoyl-ACP. Can catalyze the dehydratase reaction for beta-hydroxyacyl-ACPs with saturated chain lengths up to 16:0, being most active on intermediate chain length. The chain is 3-hydroxydecanoyl-[acyl-carrier-protein] dehydratase from Xanthomonas campestris pv. campestris (strain 8004).